The sequence spans 346 residues: MSLLCHNKGCGQHFDPQTNLPDSCCHHPGVPVFHDALKGWSCCRKRTVDFSEFLNIKGCTVGPHCAEKLPEAPQPEGPATSSSLLEQKPPNTIPKSAETLRRERPKSDLPPKLLPLNISQALEMALEQKELDQEPGAGLDSSLIQTGASCQNPGCDAVYQGSESDATPCTYHPGAPRFHEGMKSWSCCGIQTLDFGVFLAQPGCRVGRHDWGKKLLASCRHDWHQTDSLVVVTVYGQIPLPAFNWVEASQTELHIHIVFDGNRVFQAQVKLWGVVNVEQSSVSLMPSRVEISLVKADPGFWAQLEHPDALAEKSKSGVGLEMDEEESEDSDDDLSWTEEEEEAMGE.

Zn(2+)-binding residues include cysteine 5, cysteine 10, cysteine 24, and histidine 27. The 60-residue stretch at 5 to 64 (CHNKGCGQHFDPQTNLPDSCCHHPGVPVFHDALKGWSCCRKRTVDFSEFLNIKGCTVGPH) folds into the CHORD 1 domain. Residues 28 to 31 (PGVP) carry the SH3-binding motif. The Zn(2+) site is built by cysteine 42, cysteine 43, cysteine 59, and histidine 64. Positions 70 to 78 (PEAPQPEGP) match the SH3-binding motif. Positions 70-113 (PEAPQPEGPATSSSLLEQKPPNTIPKSAETLRRERPKSDLPPKL) are disordered. A compositionally biased stretch (polar residues) spans 79–94 (ATSSSLLEQKPPNTIP). Positions 98-109 (ETLRRERPKSDL) are enriched in basic and acidic residues. The Zn(2+) site is built by cysteine 150 and cysteine 155. Residues 150–209 (CQNPGCDAVYQGSESDATPCTYHPGAPRFHEGMKSWSCCGIQTLDFGVFLAQPGCRVGRH) enclose the CHORD 2 domain. The SH2-binding signature appears at 159–162 (YQGS). Zn(2+) contacts are provided by cysteine 169 and histidine 172. An SH3-binding motif is present at residues 173-176 (PGAP). 4 residues coordinate Zn(2+): cysteine 187, cysteine 188, cysteine 204, and histidine 209. The 90-residue stretch at 216–305 (LASCRHDWHQ…ADPGFWAQLE (90 aa)) folds into the CS domain. Positions 235-238 (YGQI) match the SH2-binding motif. Residues 311–346 (AEKSKSGVGLEMDEEESEDSDDDLSWTEEEEEAMGE) are disordered. Positions 321–346 (EMDEEESEDSDDDLSWTEEEEEAMGE) are enriched in acidic residues.

In terms of assembly, interacts with beta-1 integrin subunit. This interaction is regulated by divalent cations, and it occurs only in absence of calcium.

Its function is as follows. May play a role during maturation and/or organization of muscles cells. The protein is Integrin beta-1-binding protein 2 (ITGB1BP2) of Sus scrofa (Pig).